Consider the following 342-residue polypeptide: Dihydroorotate dehydrogenase (quinone) (342 aa).

Residues 61–65 (AGLDK) and Thr85 contribute to the FMN site. A substrate-binding site is contributed by Lys65. A substrate-binding site is contributed by 110-114 (NRMGF). 2 residues coordinate FMN: Asn138 and Asn171. Residue Asn171 coordinates substrate. Ser174 acts as the Nucleophile in catalysis. Position 176 (Asn176) interacts with substrate. FMN is bound by residues Lys216 and Thr244. 245–246 (NT) serves as a coordination point for substrate. Residues Gly267, Gly296, and 317–318 (YS) each bind FMN.

Belongs to the dihydroorotate dehydrogenase family. Type 2 subfamily. Monomer. FMN is required as a cofactor.

The protein localises to the cell membrane. The catalysed reaction is (S)-dihydroorotate + a quinone = orotate + a quinol. It functions in the pathway pyrimidine metabolism; UMP biosynthesis via de novo pathway; orotate from (S)-dihydroorotate (quinone route): step 1/1. Its function is as follows. Catalyzes the conversion of dihydroorotate to orotate with quinone as electron acceptor. The polypeptide is Dihydroorotate dehydrogenase (quinone) (Pseudomonas aeruginosa (strain LESB58)).